Here is a 179-residue protein sequence, read N- to C-terminus: Putative ADP-ribosylation factor-like protein 5C (179 aa).

The N-myristoyl glycine moiety is linked to residue Gly-2. GTP is bound by residues 23–30, 66–70, and 125–128; these read GLDNEGKT, DIVRP, and NKQD.

Belongs to the small GTPase superfamily. Arf family.

Functionally, binds and exchanges GTP and GDP. The chain is Putative ADP-ribosylation factor-like protein 5C (ARL5C) from Homo sapiens (Human).